The following is a 385-amino-acid chain: tRNA-specific 2-thiouridylase MnmA (385 aa).

Residues 8–15 and leucine 34 each bind ATP; that span reads AMSGGVDS. Cysteine 102 (nucleophile) is an active-site residue. Cysteines 102 and 200 form a disulfide. Residue glycine 126 coordinates ATP. Residues 150–152 form an interaction with tRNA region; sequence KDQ. Cysteine 200 (cysteine persulfide intermediate) is an active-site residue. The interval 307–308 is interaction with tRNA; the sequence is RY.

This sequence belongs to the MnmA/TRMU family.

The protein resides in the cytoplasm. It catalyses the reaction S-sulfanyl-L-cysteinyl-[protein] + uridine(34) in tRNA + AH2 + ATP = 2-thiouridine(34) in tRNA + L-cysteinyl-[protein] + A + AMP + diphosphate + H(+). Catalyzes the 2-thiolation of uridine at the wobble position (U34) of tRNA, leading to the formation of s(2)U34. The protein is tRNA-specific 2-thiouridylase MnmA of Heliobacterium modesticaldum (strain ATCC 51547 / Ice1).